A 415-amino-acid polypeptide reads, in one-letter code: 3-oxoacyl-[acyl-carrier-protein] synthase 2 (415 aa).

Residues 3–412 (KRRVVVTGMG…GTNGSLVFKK (410 aa)) form the Ketosynthase family 3 (KS3) domain. Catalysis depends on for beta-ketoacyl synthase activity residues Cys164, His304, and His342.

The protein belongs to the thiolase-like superfamily. Beta-ketoacyl-ACP synthases family. In terms of assembly, homodimer.

It carries out the reaction a fatty acyl-[ACP] + malonyl-[ACP] + H(+) = a 3-oxoacyl-[ACP] + holo-[ACP] + CO2. It catalyses the reaction (9Z)-hexadecenoyl-[ACP] + malonyl-[ACP] + H(+) = 3-oxo-(11Z)-octadecenoyl-[ACP] + holo-[ACP] + CO2. Its pathway is lipid metabolism; fatty acid biosynthesis. Its function is as follows. Involved in the type II fatty acid elongation cycle. Catalyzes the elongation of a wide range of acyl-ACP by the addition of two carbons from malonyl-ACP to an acyl acceptor. Can efficiently catalyze the conversion of palmitoleoyl-ACP (cis-hexadec-9-enoyl-ACP) to cis-vaccenoyl-ACP (cis-octadec-11-enoyl-ACP), an essential step in the thermal regulation of fatty acid composition. In Vibrio harveyi (Beneckea harveyi), this protein is 3-oxoacyl-[acyl-carrier-protein] synthase 2 (fabF).